Consider the following 440-residue polypeptide: Cytochrome P450 monooygenase 1 (440 aa).

Cys-381 contributes to the heme binding site.

This sequence belongs to the cytochrome P450 family. It depends on heme as a cofactor.

Its pathway is plant hormone biosynthesis; gibberellin biosynthesis. Functionally, GA14 synthase; part of the gene cluster that mediates the biosynthesis of gibberellins (GAs), diterpenoids that may provide a selective advantage during infection of the preferred host plant, rice. Gibberellins (GAs) are diterpenoids and are synthesized via the mevalonate pathway. Biosynthesis of the major metabolite GA3 (gibberellic acid) from geranylgeranyl diphosphate (GGPP) requires 13 steps. The GGPP produced by the geranylgeranyl diphosphate synthase GGS2 is converted to ent-kaurene via ent-copalyldiphosphate in a two-step cyclization reaction performed by the bifunctional ent-copalyl diphosphate synthase/ent-kaurene synthase enzyme (CPS/KS). Ent-Kaurene is metabolized to GAs by a series of oxidation reactions catalyzed by cytochrome P450 monooxygenases. Cytochrome P450 monooxygenase P450-4 is an ent-kaurene oxidase that catalyzes the three oxidation steps between ent-kaurene and ent-kaurenoic acid. The highly multifunctional cytochrome P450 monooxygenase P450-1 then catalyzes four steps involving oxidation at two carbon atoms, in the main pathway from ent-kaurenoic acid to GA14 via GA12-aldehyde as well as producing kaurenolides and fujenoic acids as by-products. The cytochrome P450 monooxygenase P450-2 then converts GA14 to GA4 by removal of C-20. GA4 is further converted to GA7 by the GA4 desaturase DES via 1,2-desaturation before cytochrome P450 monooxygenase P450-3, a 13-hydroxylase, hydroxylates GA7 to GA3, the final product of the GA-biosynthetic pathway. The polypeptide is Cytochrome P450 monooygenase 1 (Gibberella fujikuroi (strain CBS 195.34 / IMI 58289 / NRRL A-6831) (Bakanae and foot rot disease fungus)).